A 147-amino-acid chain; its full sequence is Large ribosomal subunit protein uL15 (147 aa).

Residues 1 to 47 form a disordered region; sequence MKLHELKPAEGAVRAKRRLGRGTATGQGKTAGRGQKGQWSRSGGGVR. Positions 23–35 are enriched in gly residues; that stretch reads TATGQGKTAGRGQ.

Belongs to the universal ribosomal protein uL15 family. As to quaternary structure, part of the 50S ribosomal subunit.

In terms of biological role, binds to the 23S rRNA. This Clostridioides difficile (strain 630) (Peptoclostridium difficile) protein is Large ribosomal subunit protein uL15.